The primary structure comprises 154 residues: Ribonuclease H (154 aa).

Positions 1 to 142 (MTKQVEIFTD…CDELARQGAN (142 aa)) constitute an RNase H type-1 domain. Mg(2+) is bound by residues aspartate 10, glutamate 48, aspartate 70, and aspartate 134.

The protein belongs to the RNase H family. As to quaternary structure, monomer. Mg(2+) is required as a cofactor.

The protein resides in the cytoplasm. It carries out the reaction Endonucleolytic cleavage to 5'-phosphomonoester.. Endonuclease that specifically degrades the RNA of RNA-DNA hybrids. The sequence is that of Ribonuclease H from Yersinia pestis bv. Antiqua (strain Antiqua).